A 349-amino-acid chain; its full sequence is Aldehyde reductase YahK (349 aa).

Zn(2+) contacts are provided by Cys40, His62, Cys93, Cys96, Cys99, Cys107, and Cys158.

This sequence belongs to the zinc-containing alcohol dehydrogenase family. Zn(2+) serves as cofactor.

The enzyme catalyses a primary alcohol + NADP(+) = an aldehyde + NADPH + H(+). Catalyzes the reduction of a wide range of aldehydes into their corresponding alcohols. Has a strong preference for NADPH over NADH as the electron donor. Cannot use a ketone as substrate. Is a major source of NADPH-dependent aldehyde reductase activity in E.coli. The in vivo functions of YahK has yet to be determined. This Escherichia coli (strain K12) protein is Aldehyde reductase YahK (yahK).